A 90-amino-acid chain; its full sequence is Probable Fe(2+)-trafficking protein (90 aa).

It belongs to the Fe(2+)-trafficking protein family.

In terms of biological role, could be a mediator in iron transactions between iron acquisition and iron-requiring processes, such as synthesis and/or repair of Fe-S clusters in biosynthetic enzymes. The sequence is that of Probable Fe(2+)-trafficking protein from Nitrosococcus oceani (strain ATCC 19707 / BCRC 17464 / JCM 30415 / NCIMB 11848 / C-107).